The sequence spans 190 residues: Xanthine phosphoribosyltransferase 1 (190 aa).

Xanthine is bound by residues Leu20 and Asn27. Ala129–Ala133 lines the 5-phospho-alpha-D-ribose 1-diphosphate pocket. Xanthine is bound at residue Lys157.

It belongs to the purine/pyrimidine phosphoribosyltransferase family. Xpt subfamily. In terms of assembly, homodimer.

Its subcellular location is the cytoplasm. The catalysed reaction is XMP + diphosphate = xanthine + 5-phospho-alpha-D-ribose 1-diphosphate. It participates in purine metabolism; XMP biosynthesis via salvage pathway; XMP from xanthine: step 1/1. Converts the preformed base xanthine, a product of nucleic acid breakdown, to xanthosine 5'-monophosphate (XMP), so it can be reused for RNA or DNA synthesis. The protein is Xanthine phosphoribosyltransferase 1 of Clostridium perfringens (strain ATCC 13124 / DSM 756 / JCM 1290 / NCIMB 6125 / NCTC 8237 / Type A).